The primary structure comprises 951 residues: Multiple C2 and transmembrane domain-containing protein 1 (951 aa).

4 disordered regions span residues 29–79, 92–117, 129–198, and 210–231; these read LGVG…RWSG, SSSQPNLCCSSPEPLEPGGAGRAEQG, LPVA…QKSS, and LEPAPPPAEPARGPAEPQALQK. Over residues 31 to 43 the composition is skewed to gly residues; the sequence is VGKGKGGGGGRAG. The span at 147–168 shows a compositional bias: low complexity; it reads PGGRSPDSAPSSSSASSSLSSS. A compositionally biased stretch (basic and acidic residues) spans 174–184; it reads RGDRVRDESTR. The segment covering 219–228 has biased composition (low complexity); the sequence is PARGPAEPQA. 3 consecutive C2 domains span residues 240 to 358, 404 to 521, and 555 to 676; these read KIST…DVTL, QTQS…KLEL, and QKER…AYVL. The Ca(2+) site is built by aspartate 275, aspartate 281, aspartate 328, aspartate 330, aspartate 336, aspartate 438, aspartate 444, aspartate 491, aspartate 493, aspartate 499, aspartate 594, aspartate 600, aspartate 646, aspartate 648, and aspartate 654. 2 helical membrane passes run 763-783 and 866-886; these read FVLFLLIVWNFELYMIPLLLL and PFLSWLAIVALCVFTAILYFI.

Belongs to the MCTP family. Ca(2+) is required as a cofactor.

It localises to the cytoplasmic vesicle. The protein resides in the secretory vesicle. The protein localises to the synaptic vesicle membrane. It is found in the recycling endosome. Its subcellular location is the endoplasmic reticulum membrane. Calcium sensor which is essential for the stabilization of normal baseline neurotransmitter release and for the induction and long-term maintenance of presynaptic homeostatic plasticity. This chain is Multiple C2 and transmembrane domain-containing protein 1, found in Mus musculus (Mouse).